Consider the following 22-residue polypeptide: Large ribosomal subunit protein bL32 (22 aa).

Residues 1–22 (CVQQNKKSRSARDMXXSXDALE) are disordered. Residues 13 to 22 (DMXXSXDALE) show a composition bias toward low complexity.

This sequence belongs to the bacterial ribosomal protein bL32 family.

The polypeptide is Large ribosomal subunit protein bL32 (rpmF) (Ectopseudomonas mendocina (Pseudomonas mendocina)).